Here is a 656-residue protein sequence, read N- to C-terminus: UvrABC system protein C (656 aa).

The GIY-YIG domain occupies 16-95 (TDPGVYRFRD…IKEYSPRFNV (80 aa)). The 36-residue stretch at 208 to 243 (GRFLRQLEAEMKQAAAAQEYERAARIRDDIQALRTV) folds into the UVR domain.

It belongs to the UvrC family. Interacts with UvrB in an incision complex.

The protein localises to the cytoplasm. Its function is as follows. The UvrABC repair system catalyzes the recognition and processing of DNA lesions. UvrC both incises the 5' and 3' sides of the lesion. The N-terminal half is responsible for the 3' incision and the C-terminal half is responsible for the 5' incision. The chain is UvrABC system protein C from Thermobifida fusca (strain YX).